A 198-amino-acid chain; its full sequence is Threonylcarbamoyl-AMP synthase (198 aa).

One can recognise a YrdC-like domain in the interval 15–198; sequence LLKIYHIIKL…AISGQLIRRG (184 aa).

Belongs to the SUA5 family. TsaC subfamily.

It localises to the cytoplasm. The enzyme catalyses L-threonine + hydrogencarbonate + ATP = L-threonylcarbamoyladenylate + diphosphate + H2O. Required for the formation of a threonylcarbamoyl group on adenosine at position 37 (t(6)A37) in tRNAs that read codons beginning with adenine. Catalyzes the conversion of L-threonine, HCO(3)(-)/CO(2) and ATP to give threonylcarbamoyl-AMP (TC-AMP) as the acyladenylate intermediate, with the release of diphosphate. This chain is Threonylcarbamoyl-AMP synthase, found in Baumannia cicadellinicola subsp. Homalodisca coagulata.